We begin with the raw amino-acid sequence, 317 residues long: Transaldolase (317 aa).

Catalysis depends on lysine 132, which acts as the Schiff-base intermediate with substrate.

Belongs to the transaldolase family. Type 1 subfamily. Homodimer.

The protein localises to the cytoplasm. It carries out the reaction D-sedoheptulose 7-phosphate + D-glyceraldehyde 3-phosphate = D-erythrose 4-phosphate + beta-D-fructose 6-phosphate. It functions in the pathway carbohydrate degradation; pentose phosphate pathway; D-glyceraldehyde 3-phosphate and beta-D-fructose 6-phosphate from D-ribose 5-phosphate and D-xylulose 5-phosphate (non-oxidative stage): step 2/3. Functionally, transaldolase is important for the balance of metabolites in the pentose-phosphate pathway. The polypeptide is Transaldolase (Yersinia pseudotuberculosis serotype IB (strain PB1/+)).